We begin with the raw amino-acid sequence, 127 residues long: Small ribosomal subunit protein uS13 (127 aa).

A disordered region spans residues 93–127; the sequence is RRSLPVRGQRTHTNARTRKGPRKGTVANKKKATAK.

The protein belongs to the universal ribosomal protein uS13 family. As to quaternary structure, part of the 30S ribosomal subunit. Forms a loose heterodimer with protein S19. Forms two bridges to the 50S subunit in the 70S ribosome.

Its function is as follows. Located at the top of the head of the 30S subunit, it contacts several helices of the 16S rRNA. In the 70S ribosome it contacts the 23S rRNA (bridge B1a) and protein L5 of the 50S subunit (bridge B1b), connecting the 2 subunits; these bridges are implicated in subunit movement. Contacts the tRNAs in the A and P-sites. This Koribacter versatilis (strain Ellin345) protein is Small ribosomal subunit protein uS13.